Reading from the N-terminus, the 134-residue chain is DNA-binding protein H-NS, plasmid (134 aa).

A coiled-coil region spans residues 23 to 67; the sequence is LEILEELLEKLSVVVEERRQEESSKEAELKARLEKIESLRQLMLE. Residues 77–96 are disordered; it reads SSFSAKSGAPKKVREPRPAK. Residues 112-117 mediate DNA binding; that stretch reads QGRTPK.

It belongs to the histone-like protein H-NS family. Homodimer that oligomerizes on DNA into higher-order complexes that form bridges between disparate regions of DNA compacting it. Interacts with Hha, YdgT and StpA.

The protein resides in the cytoplasm. It is found in the nucleoid. Functionally, a DNA-binding protein implicated in transcriptional repression and chromosome organization and compaction. Binds DNA, modifying gene expression, especially non-core genes. Does not regulate the same set of genes as its chromosomal counterpart (tested in S.typhimurium strain SL1344 / SV5015, chromosomal H-NS protein is AC A0A0H3NBY9). Thus it has a not-completely overlapping set of gene targets compared to its chromosomal homolog; many of these target genes are either plasmid-encoded or acquired by horizontally transferred genes (HTG). This protein can function in the absence of H-NS-modulating protein Hha (either chromosomal or plasmid-encoded), although many HTG genes are regulated by an H-NS/Hha complex. Binds nucleation sites in AT-rich DNA and bridges them, forming higher-order nucleoprotein complexes and condensing the chromosome. A subset of genes are repressed by H-NS in association with Hha and/or Cnu (ydgT). This chain is DNA-binding protein H-NS, plasmid (hns), found in Salmonella typhi.